We begin with the raw amino-acid sequence, 434 residues long: MESESESGAAADTPPLETLSFHGDEEIIEVVELDPGPPDPDDLAQEMEDVDFEEEEEEEGNEEGWVLEPQEGVVGSMEGPDDSEVTFALHSASVFCVSLDPKTNTLAVTGGEDDKAFVWRLSDGELLFECAGHKDSVTCAGFSHDSTLVATGDMSGLLKVWQVDTKEEVWSFEAGDLEWMEWHPRAPVLLAGTADGNTWMWKVPNGDCKTFQGPNCPATCGRVLPDGKRAVVGYEDGTIRIWDLKQGSPIHVLKGTEGHQGPLTCVATNQDGSLILTGSVDCQAKLVSATTGKVVGVFRPETVASQPSLGEGEESESNSVESLGFCSVMPLAAVGYLDGTLAIYDLATQTLRHQCQHQSGIVQLLWEAGTAVVYTCSLDGIVRLWDARTGRLLTDYRGHTAEILDFALSKDASLVVTTSGDHKAKVFCVQRPDR.

The tract at residues Met-1–Glu-63 is disordered. Ser-20 is subject to Phosphoserine. The span at Asp-39–Glu-62 shows a compositional bias: acidic residues. 8 WD repeats span residues Leu-89 to Glu-129, Gly-132 to Ser-171, Glu-173 to Gln-212, Pro-214 to Lys-254, Gly-258 to Arg-299, Ser-315 to Gln-354, Gln-356 to Asp-395, and Gly-398 to Asp-433.

Its subcellular location is the cell membrane. It localises to the cytoplasm. In terms of biological role, plays a role in angiogenesis and cell migration. In smooth muscle cell migration, may act through the RhoA pathway. This is Angio-associated migratory cell protein (AAMP) from Pongo abelii (Sumatran orangutan).